Consider the following 375-residue polypeptide: MMEKTVRRGTRTGFTTGACSAAAARAAVLGLVEGAVPEAVDCLLPNGDVVRFAVNDGACEAGQAAHAMVIKDAGDDPDCTDKAHLTADVRVLPGRAGEVVLCGGFGVGTVTMAGLGLEVGGPAINPVPRRNIEENVRAVGGPLLANAGIEVTISVPQGVEMARKTLNARLGILGGISILGTTGIVKPYSTSAYRASVVQGVQVAATLGHGVVVLTTGGRTEQFAMKERPELPAACFVQMGDFLRYALDEAVAQGLREVVIGGMVGKLTKIAQGETITHANRAEVDTQLLAELAARVGAPPDVCAEIAAAETARFGAERMQALGLGEPFHHALAQAVVQTLTAPDRYGDRFHLTVLVCDFDGSKITEAASGPAATA.

Belongs to the CbiD family.

The catalysed reaction is Co-precorrin-5B + S-adenosyl-L-methionine = Co-precorrin-6A + S-adenosyl-L-homocysteine. Its pathway is cofactor biosynthesis; adenosylcobalamin biosynthesis; cob(II)yrinate a,c-diamide from sirohydrochlorin (anaerobic route): step 6/10. In terms of biological role, catalyzes the methylation of C-1 in cobalt-precorrin-5B to form cobalt-precorrin-6A. The chain is Cobalt-precorrin-5B C(1)-methyltransferase from Paracidovorax citrulli (strain AAC00-1) (Acidovorax citrulli).